Reading from the N-terminus, the 81-residue chain is Large ribosomal subunit protein bL31B (81 aa).

Belongs to the bacterial ribosomal protein bL31 family. Type B subfamily. As to quaternary structure, part of the 50S ribosomal subunit.

The protein is Large ribosomal subunit protein bL31B of Cutibacterium acnes (strain DSM 16379 / KPA171202) (Propionibacterium acnes).